The chain runs to 252 residues: Hydrolase phiM (252 aa).

The Charge relay system role is filled by serine 126.

It belongs to the LovG family.

It functions in the pathway secondary metabolite biosynthesis. In terms of biological role, hydrolase; part of the gene cluster that mediates the biosynthesis of the antihypercholesterolemic agents phomoidrides which are dimeric anhydrides. Within the pathway, phiM releases the C12-fatty acyl chain from phiA. The pathway begins with the highly reducing polyketide synthase tstA that catalyzes the formation of a C12-fatty acyl-ACP, starting from one acetate and 5 malonate units. The hydrolase tstM is involved in the release of the C12-fatty acyl chain from phiA. The alkylcitrate synthase (ACS) tstJ and the alkylcitrate dehydratase (ACDH) tstI then give rise to decarboxylated monomeric anhydrides by coupling the C12-fatty acyl chain with oxalacetic acid. The cyclase tstC is responsible for the dimerization of the monomeric anhydrides which leads to the production of prephomoidride that contains the characteristic bicyclo[4.3.1]deca-1,6-diene system of phomoidrides. Iterative oxidation catalyzed by the alpha-ketoglutarate-dependent dioxygenase tstK produced then phomoidride A. Finally, the methyltransferase tstE converts phomoidride A to phomoidride B via an acetalization reaction. The phosphatidylethanolamine-binding protein tstB and tstN are not essential for dimerization and their functions have still to be determined. The polypeptide is Hydrolase phiM (Talaromyces stipitatus (strain ATCC 10500 / CBS 375.48 / QM 6759 / NRRL 1006) (Penicillium stipitatum)).